The sequence spans 424 residues: Probable serine/threonine-protein kinase PBL6 (424 aa).

The disordered stretch occupies residues 1-26 (MGCFGRTPKSNKRSDTKTTKNNDFTP). Glycine 2 carries the N-myristoyl glycine lipid modification. Cysteine 3 carries the S-palmitoyl cysteine lipid modification. Threonine 87 carries the phosphothreonine modification. In terms of domain architecture, Protein kinase spans 98-377 (FKSDCFLGEG…VVMALDHLAS (280 aa)). Residues 104 to 112 (LGEGGFGKV) and lysine 127 each bind ATP. Tyrosine 172 is subject to Phosphotyrosine. The active-site Proton acceptor is aspartate 225. Phosphoserine is present on residues serine 229 and serine 259. Threonine 260 and threonine 265 each carry phosphothreonine. Tyrosine 273 is modified (phosphotyrosine).

Belongs to the protein kinase superfamily. Ser/Thr protein kinase family.

It localises to the cell membrane. It catalyses the reaction L-seryl-[protein] + ATP = O-phospho-L-seryl-[protein] + ADP + H(+). The enzyme catalyses L-threonyl-[protein] + ATP = O-phospho-L-threonyl-[protein] + ADP + H(+). In terms of biological role, may be involved in plant defense signaling. The protein is Probable serine/threonine-protein kinase PBL6 of Arabidopsis thaliana (Mouse-ear cress).